Consider the following 141-residue polypeptide: Large ribosomal subunit protein uL16 (141 aa).

This sequence belongs to the universal ribosomal protein uL16 family. Part of the 50S ribosomal subunit.

Functionally, binds 23S rRNA and is also seen to make contacts with the A and possibly P site tRNAs. The chain is Large ribosomal subunit protein uL16 from Geobacillus thermodenitrificans (strain NG80-2).